The following is an 820-amino-acid chain: Trimethylamine-N-oxide reductase (820 aa).

A signal peptide (tat-type signal) is located at residues 1–33; it reads MAITRRSFLKGVATTSAASVIGPSLLASASANA. Residue Ser-179 participates in Mo-bis(molybdopterin guanine dinucleotide) binding.

Belongs to the prokaryotic molybdopterin-containing oxidoreductase family. The cofactor is Mo-bis(molybdopterin guanine dinucleotide). Predicted to be exported by the Tat system. The position of the signal peptide cleavage has not been experimentally proven.

The protein localises to the periplasm. The enzyme catalyses trimethylamine + 2 Fe(III)-[cytochrome c] + H2O = trimethylamine N-oxide + 2 Fe(II)-[cytochrome c] + 3 H(+). Its function is as follows. Reduces trimethylamine-N-oxide (TMAO) into trimethylamine; an anaerobic reaction coupled to energy-yielding reactions. This is Trimethylamine-N-oxide reductase (torA) from Vibrio vulnificus (strain CMCP6).